Here is a 142-residue protein sequence, read N- to C-terminus: uncharacterized protein (142 aa).

Residues 1-26 (MITEFIKSFLLFFFLPFFLSMPMIFA) form the signal peptide.

This is an uncharacterized protein from Schizosaccharomyces pombe (strain 972 / ATCC 24843) (Fission yeast).